The following is a 901-amino-acid chain: Protein translocase subunit SecA (901 aa).

Residues Q87, G105–T109, and D512 contribute to the ATP site. Zn(2+) is bound by residues C885, C887, C896, and H897.

The protein belongs to the SecA family. In terms of assembly, monomer and homodimer. Part of the essential Sec protein translocation apparatus which comprises SecA, SecYEG and auxiliary proteins SecDF-YajC and YidC. Zn(2+) serves as cofactor.

Its subcellular location is the cell inner membrane. The protein localises to the cytoplasm. It carries out the reaction ATP + H2O + cellular proteinSide 1 = ADP + phosphate + cellular proteinSide 2.. In terms of biological role, part of the Sec protein translocase complex. Interacts with the SecYEG preprotein conducting channel. Has a central role in coupling the hydrolysis of ATP to the transfer of proteins into and across the cell membrane, serving both as a receptor for the preprotein-SecB complex and as an ATP-driven molecular motor driving the stepwise translocation of polypeptide chains across the membrane. This chain is Protein translocase subunit SecA, found in Salmonella arizonae (strain ATCC BAA-731 / CDC346-86 / RSK2980).